Here is a 195-residue protein sequence, read N- to C-terminus: Imidazoleglycerol-phosphate dehydratase (195 aa).

Belongs to the imidazoleglycerol-phosphate dehydratase family.

Its subcellular location is the cytoplasm. It carries out the reaction D-erythro-1-(imidazol-4-yl)glycerol 3-phosphate = 3-(imidazol-4-yl)-2-oxopropyl phosphate + H2O. It functions in the pathway amino-acid biosynthesis; L-histidine biosynthesis; L-histidine from 5-phospho-alpha-D-ribose 1-diphosphate: step 6/9. This Sphingopyxis alaskensis (strain DSM 13593 / LMG 18877 / RB2256) (Sphingomonas alaskensis) protein is Imidazoleglycerol-phosphate dehydratase.